The primary structure comprises 100 residues: Transcription and mRNA export factor SUS1 (100 aa).

This sequence belongs to the ENY2 family. As to quaternary structure, component of the nuclear pore complex (NPC)-associated TREX-2 complex (transcription and export complex 2), composed of at least SUS1, SAC3, THP1, SEM1, and CDC31. TREX-2 contains 2 SUS1 chains. The TREX-2 complex interacts with the nucleoporin NUP1. Component of the 1.8 MDa SAGA transcription coactivator-HAT complex. SAGA is built of 5 distinct domains with specialized functions. Within the SAGA complex, SUS1, SGF11, SGF73 and UBP8 form an additional subcomplex of SAGA called the DUB module (deubiquitination module). Interacts directly with THP1, SAC3, SGF11, and with the RNA polymerase II.

The protein localises to the nucleus. It is found in the nucleoplasm. Its subcellular location is the cytoplasm. It localises to the P-body. In terms of biological role, involved in mRNA export coupled transcription activation by association with both the TREX-2 and the SAGA complexes. At the promoters, SAGA is required for recruitment of the basal transcription machinery. It influences RNA polymerase II transcriptional activity through different activities such as TBP interaction and promoter selectivity, interaction with transcription activators, and chromatin modification through histone acetylation and deubiquitination. Within the SAGA complex, participates in a subcomplex required for deubiquitination of H2B and for the maintenance of steady-state H3 methylation levels. The TREX-2 complex functions in docking export-competent ribonucleoprotein particles (mRNPs) to the nuclear entrance of the nuclear pore complex (nuclear basket). TREX-2 participates in mRNA export and accurate chromatin positioning in the nucleus by tethering genes to the nuclear periphery. May also be involved in cytoplasmic mRNA decay by interaction with components of P-bodies. The polypeptide is Transcription and mRNA export factor SUS1 (Candida glabrata (strain ATCC 2001 / BCRC 20586 / JCM 3761 / NBRC 0622 / NRRL Y-65 / CBS 138) (Yeast)).